A 337-amino-acid polypeptide reads, in one-letter code: DNA-directed RNA polymerase subunit alpha (337 aa).

The tract at residues 1-233 (MIQKNWQELI…DQLSIFVNFE (233 aa)) is alpha N-terminal domain (alpha-NTD). Residues 249–337 (FNPALLKKVD…DLAKRYEDQY (89 aa)) form an alpha C-terminal domain (alpha-CTD) region.

It belongs to the RNA polymerase alpha chain family. Homodimer. The RNAP catalytic core consists of 2 alpha, 1 beta, 1 beta' and 1 omega subunit. When a sigma factor is associated with the core the holoenzyme is formed, which can initiate transcription.

The enzyme catalyses RNA(n) + a ribonucleoside 5'-triphosphate = RNA(n+1) + diphosphate. In terms of biological role, DNA-dependent RNA polymerase catalyzes the transcription of DNA into RNA using the four ribonucleoside triphosphates as substrates. This chain is DNA-directed RNA polymerase subunit alpha, found in Brucella suis (strain ATCC 23445 / NCTC 10510).